The sequence spans 604 residues: Pescadillo homolog (604 aa).

The 100-residue stretch at 349-448 (PTSTLFSKFI…ELLPVNKYAP (100 aa)) folds into the BRCT domain. Disordered stretches follow at residues 452-562 (LPPH…MTNK) and 579-604 (TRTQ…LSKK). 2 coiled-coil regions span residues 468–522 (EAEK…LEAA) and 573–604 (GIDK…LSKK). Residues 476 to 510 (ENAEEEEEDEVDEDDEDADEDEEDEEEEDEEEDED) show a composition bias toward acidic residues. The segment covering 593 to 604 (KTKAQLDKLSKK) has biased composition (basic and acidic residues).

Belongs to the pescadillo family. In terms of assembly, component of the NOP7 complex, composed of ERB1, NOP7 and YTM1. The complex is held together by ERB1, which interacts with NOP7 via its N-terminal domain and with YTM1 via a high-affinity interaction between the seven-bladed beta-propeller domains of the 2 proteins. The NOP7 complex associates with the 66S pre-ribosome.

The protein resides in the nucleus. Its subcellular location is the nucleolus. It is found in the nucleoplasm. In terms of biological role, component of the NOP7 complex, which is required for maturation of the 25S and 5.8S ribosomal RNAs and formation of the 60S ribosome. The chain is Pescadillo homolog from Scheffersomyces stipitis (strain ATCC 58785 / CBS 6054 / NBRC 10063 / NRRL Y-11545) (Yeast).